The sequence spans 862 residues: Cell surface glycoprotein (862 aa).

The signal sequence occupies residues 1–34 (MTDTQQKIKAVLLTVLMVTSVFAATIAFSGAAAA). 3 disordered regions span residues 35-60 (SERGAGDSYTTGPTDGNQDNVDSAGN), 101-126 (ILLESPIPQDQPTGRYTANPGVEGTE), and 200-220 (VNTNVNNDDHPNPAADGDRDD). The span at 43–57 (YTTGPTDGNQDNVDS) shows a compositional bias: polar residues. Basic and acidic residues predominate over residues 206–220 (NDDHPNPAADGDRDD). N-linked (GlcNAc...) asparagine glycans are attached at residues Asn-442, Asn-520, Asn-550, Asn-702, and Asn-761. Residues 752-838 (LSDENVEPGN…TEEATTEATG (87 aa)) are disordered. The segment covering 784–801 (SLEEEQPATDTPEPDTDT) has biased composition (acidic residues). Over residues 802–815 (PEPATDTPEPATDT) the composition is skewed to low complexity. Residues 816–833 (PEPDTDTPEPDTETEEAT) are compositionally biased toward acidic residues. The helical transmembrane segment at 838-858 (GPGFTAAIALIALVAAALLAV) threads the bilayer. The PGF sorting signal signature appears at 839 to 841 (PGF).

This sequence belongs to the halobacterial S-layer protein family. Glycosylated. In terms of processing, cleaved by the archaeosortase ArtA at the C-terminus, with removal of a short hydrophobic segment. Post-translationally, lipidation.

Its subcellular location is the secreted. The protein resides in the cell wall. The protein localises to the S-layer. It is found in the cell membrane. Functionally, S-layer protein. The S-layer is a paracrystalline mono-layered assembly of proteins which coat the surface of the cell. The sequence is that of Cell surface glycoprotein from Haloarcula japonica (strain ATCC 49778 / DSM 6131 / JCM 7785 / NBRC 101032 / NCIMB 13157 / TR-1).